The primary structure comprises 41 residues: Large ribosomal subunit protein bL36 (41 aa).

This sequence belongs to the bacterial ribosomal protein bL36 family.

This Rhodopseudomonas palustris (strain BisB5) protein is Large ribosomal subunit protein bL36.